The primary structure comprises 100 residues: Small ribosomal subunit protein uS14c (100 aa).

The protein belongs to the universal ribosomal protein uS14 family. In terms of assembly, part of the 30S ribosomal subunit.

It is found in the plastid. It localises to the chloroplast. Binds 16S rRNA, required for the assembly of 30S particles. In Euglena gracilis, this protein is Small ribosomal subunit protein uS14c.